The sequence spans 530 residues: Fusaric acid resistance protein FusA (530 aa).

The first 23 residues, 1-23 (MQSPATKGTLALAVLAVSLIMAG), serve as a signal peptide directing secretion. Cys24 carries the N-palmitoyl cysteine lipid modification. The S-diacylglycerol cysteine moiety is linked to residue Cys24. Disordered stretches follow at residues 375-442 (NAGV…RQRA) and 476-530 (GVET…PAAR). Low complexity-rich tracts occupy residues 421 to 430 (RPQLPAVARR) and 494 to 530 (AAGA…PAAR).

This sequence belongs to the outer membrane factor (OMF) (TC 1.B.17) family.

It is found in the cell membrane. In terms of biological role, involved in the resistance (detoxification) of the fungal toxin fusaric acid. This chain is Fusaric acid resistance protein FusA (fusA), found in Burkholderia cepacia (Pseudomonas cepacia).